An 898-amino-acid polypeptide reads, in one-letter code: DNA mismatch repair protein MutS (898 aa).

646-653 (GPNMGGKS) provides a ligand contact to ATP.

Belongs to the DNA mismatch repair MutS family.

This protein is involved in the repair of mismatches in DNA. It is possible that it carries out the mismatch recognition step. This protein has a weak ATPase activity. This chain is DNA mismatch repair protein MutS, found in Brucella ovis (strain ATCC 25840 / 63/290 / NCTC 10512).